Here is a 392-residue protein sequence, read N- to C-terminus: ATP phosphoribosyltransferase regulatory subunit (392 aa).

It belongs to the class-II aminoacyl-tRNA synthetase family. HisZ subfamily. As to quaternary structure, heteromultimer composed of HisG and HisZ subunits.

It localises to the cytoplasm. It functions in the pathway amino-acid biosynthesis; L-histidine biosynthesis; L-histidine from 5-phospho-alpha-D-ribose 1-diphosphate: step 1/9. Required for the first step of histidine biosynthesis. May allow the feedback regulation of ATP phosphoribosyltransferase activity by histidine. The polypeptide is ATP phosphoribosyltransferase regulatory subunit (Synechococcus sp. (strain CC9902)).